We begin with the raw amino-acid sequence, 441 residues long: L-seryl-tRNA(Sec) selenium transferase (441 aa).

Lys-283 is subject to N6-(pyridoxal phosphate)lysine.

It belongs to the SelA family. Pyridoxal 5'-phosphate serves as cofactor.

The protein localises to the cytoplasm. The enzyme catalyses L-seryl-tRNA(Sec) + selenophosphate + H(+) = L-selenocysteinyl-tRNA(Sec) + phosphate. Its pathway is aminoacyl-tRNA biosynthesis; selenocysteinyl-tRNA(Sec) biosynthesis; selenocysteinyl-tRNA(Sec) from L-seryl-tRNA(Sec) (bacterial route): step 1/1. Converts seryl-tRNA(Sec) to selenocysteinyl-tRNA(Sec) required for selenoprotein biosynthesis. This Campylobacter concisus (strain 13826) protein is L-seryl-tRNA(Sec) selenium transferase.